We begin with the raw amino-acid sequence, 250 residues long: Probable transcriptional regulatory protein Ctha_1786 (250 aa).

The protein belongs to the TACO1 family.

It localises to the cytoplasm. The sequence is that of Probable transcriptional regulatory protein Ctha_1786 from Chloroherpeton thalassium (strain ATCC 35110 / GB-78).